The chain runs to 1507 residues: DDB1- and CUL4-associated factor 1 (1507 aa).

The protein kinase-like stretch occupies residues 141-500 (QPLRTYSTGL…STLEILNLED (360 aa)). Phosphoserine is present on residues Ser-202 and Ser-255. Residues 242–288 (HLDSGHKTSSRVNSTTKPEDGGLKKNKSAKQGDRENFRKAKQKLGFS) form a disordered region. The Chromo domain occupies 562-593 (SYTHEQIVEMMEFLIEYGPAQLYWEPAEVFLK). An N6-acetyllysine modification is found at Lys-701. Ser-828 is modified (phosphoserine). The region spanning 846-878 (PEKELLLLIRNHLISKGLGETATVLTKEADLPM) is the LisH domain. Position 888 is a phosphothreonine (Thr-888). Ser-895 and Ser-898 each carry phosphoserine. A disordered region spans residues 917 to 947 (AAVGASAPSAPTAHPQPRPPQGPLALPGPSY). Ser-979 and Ser-1000 each carry phosphoserine. WD repeat units lie at residues 1091–1130 (EDES…EEAS), 1133–1174 (CHNS…DMKH), 1176–1213 (FTED…KLLT), 1215–1247 (FNPD…WDVR), and 1248–1290 (SAQA…LLHT). The tract at residues 1091–1290 (EDESGFTCCA…DLRTFHLLHT (200 aa)) is WD repeat-like region. Short sequence motifs (DWD box) lie at residues 1242 to 1249 (VLWDVRSA) and 1278 to 1285 (EIWDLRTF). Ser-1328 carries the post-translational modification Phosphoserine. Residues 1393–1507 (RLAEDEDEEE…EDDIILSLNE (115 aa)) are disordered. Acidic residues-rich tracts occupy residues 1396-1483 (EDED…EEVE) and 1490-1501 (DSSDNSDLEDDI). The interaction with NF2 stretch occupies residues 1418-1507 (DDDTDDLDEL…EDDIILSLNE (90 aa)).

Belongs to the VPRBP/DCAF1 family. As to quaternary structure, component of the DCX (DDB1-CUL4-X-box) E3 ubiquitin-protein ligase complex, named CUL4A-RBX1-DDB1-DCAF1/VPRBP complex. Interacts with DDB1; the interaction is direct. Also forms a ternary complex with DDA1 and DDB1. Interacts with NF2 (via FERM domain). Component of the EDVP complex, a E3 ligase complex containing DYRK2, EDD/UBR5, DDB1 and DCAF1. Interacts with DYRK2; the interaction is direct. Interacts with RAG1; the interaction is direct. Interacts with LLGL1 and LLGL2. Interacts with histone H3. Interacts with ESR1 and LATS1; probably recruited by LATS1 to promote ESR1 ubiquitination and ubiquitin-mediated proteasomal degradation. Directly interacts with TET1, TET2 and TET3 (via C-terminus). Interacts with CEP78; promoting DCAF1 localization to centrosomes. (Microbial infection) Interacts with HIV-1 virus Vpr protein; the interaction is direct. In terms of assembly, (Microbial infection) Interacts with HIV-2 virus Vpx protein; the interaction is direct and the complex recruits SAMHD1 to promote its ubiquitin-dependent proteasomal degradation. As to quaternary structure, (Microbial infection) Interacts (via C-terminus) with human cytomegalovirus protein UL35; this interaction induces the accumulation of cells in the G2 phase of the cell cycle. Ubiquitously expressed.

Its subcellular location is the cytoplasm. It localises to the nucleus. It is found in the cytoskeleton. The protein resides in the microtubule organizing center. The protein localises to the centrosome. It catalyses the reaction L-seryl-[protein] + ATP = O-phospho-L-seryl-[protein] + ADP + H(+). It carries out the reaction L-threonyl-[protein] + ATP = O-phospho-L-threonyl-[protein] + ADP + H(+). It participates in protein modification; protein ubiquitination. Acts both as a substrate recognition component of E3 ubiquitin-protein ligase complexes and as an atypical serine/threonine-protein kinase, playing key roles in various processes such as cell cycle, telomerase regulation and histone modification. Probable substrate-specific adapter of a DCX (DDB1-CUL4-X-box) E3 ubiquitin-protein ligase complex, named CUL4A-RBX1-DDB1-DCAF1/VPRBP complex, which mediates ubiquitination and proteasome-dependent degradation of proteins such as NF2. Involved in the turnover of methylated proteins: recognizes and binds methylated proteins via its chromo domain, leading to ubiquitination of target proteins by the RBX1-DDB1-DCAF1/VPRBP complex. The CUL4A-RBX1-DDB1-DCAF1/VPRBP complex is also involved in B-cell development: DCAF1 is recruited by RAG1 to ubiquitinate proteins, leading to limit error-prone repair during V(D)J recombination. Also part of the EDVP complex, an E3 ligase complex that mediates ubiquitination of proteins such as TERT, leading to TERT degradation and telomerase inhibition. The EDVP complex also mediates ubiquitination and degradation of CCP110. Also acts as an atypical serine/threonine-protein kinase that specifically mediates phosphorylation of 'Thr-120' of histone H2A (H2AT120ph) in a nucleosomal context, thereby repressing transcription. H2AT120ph is present in the regulatory region of many tumor suppresor genes, down-regulates their transcription and is present at high level in a number of tumors. Involved in JNK-mediated apoptosis during cell competition process via its interaction with LLGL1 and LLGL2. By acting on TET dioxygenses, essential for oocyte maintenance at the primordial follicle stage, hence essential for female fertility. Its function is as follows. (Microbial infection) In case of infection by HIV-1 virus, it is recruited by HIV-1 Vpr in order to hijack the CUL4A-RBX1-DDB1-DCAF1/VPRBP function leading to arrest the cell cycle in G2 phase, and also to protect the viral protein from proteasomal degradation by another E3 ubiquitin ligase. The HIV-1 Vpr protein hijacks the CUL4A-RBX1-DDB1-DCAF1/VPRBP complex to promote ubiquitination and degradation of proteins such as TERT and ZIP/ZGPAT. In terms of biological role, (Microbial infection) In case of infection by HIV-2 virus, it is recruited by HIV-2 Vpx in order to hijack the CUL4A-RBX1-DDB1-DCAF1/VPRBP function leading to enhanced efficiency of macrophage infection and promotion of the replication of cognate primate lentiviruses in cells of monocyte/macrophage lineage. The chain is DDB1- and CUL4-associated factor 1 from Homo sapiens (Human).